A 479-amino-acid polypeptide reads, in one-letter code: Replication factor C large subunit (479 aa).

56-63 (GPPGVGKT) lines the ATP pocket. Residues 435–461 (LGEKPLEPQEAKARRRGEKASRDEGRK) are compositionally biased toward basic and acidic residues. Positions 435–479 (LGEKPLEPQEAKARRRGEKASRDEGRKAGKRERKGVGLDFFLGEQ) are disordered.

The protein belongs to the activator 1 small subunits family. RfcL subfamily. As to quaternary structure, heteromultimer composed of small subunits (RfcS) and large subunits (RfcL).

Its function is as follows. Part of the RFC clamp loader complex which loads the PCNA sliding clamp onto DNA. This is Replication factor C large subunit from Aeropyrum pernix (strain ATCC 700893 / DSM 11879 / JCM 9820 / NBRC 100138 / K1).